A 1164-amino-acid chain; its full sequence is DNA-directed RNA polymerase 132 kDa polypeptide (1164 aa).

It belongs to the RNA polymerase beta chain family. As to quaternary structure, the DNA-dependent RNA polymerase used for intermediate and late genes expression consists of eight subunits (147) kDa, (133) kDa, (35) kDa, (30) kDa, (22) kDa, (19) kDa, (18) kDa and (7) kDa totalling more than 500 kDa in mass. The same holoenzyme, with the addition of the transcription-specificity factor RAP94, is used for early gene expression.

The protein resides in the virion. The catalysed reaction is RNA(n) + a ribonucleoside 5'-triphosphate = RNA(n+1) + diphosphate. Functionally, part of the DNA-dependent RNA polymerase which catalyzes the transcription of viral DNA into RNA using the four ribonucleoside triphosphates as substrates. Responsible for the transcription of early, intermediate and late genes. DNA-dependent RNA polymerase associates with the early transcription factor (ETF), itself composed of D6 and A7, thereby allowing the early genes transcription. Late transcription, and probably also intermediate transcription, require newly synthesized RNA polymerase. The polypeptide is DNA-directed RNA polymerase 132 kDa polypeptide (RPO132) (Oryctolagus cuniculus (Rabbit)).